The chain runs to 806 residues: Lysine-specific demethylase JMJ15 (806 aa).

The segment at 1 to 43 is disordered; that stretch reads MEPFSAAQNKEDKDTSVEPPRRRCHRKNKGTNVEPPSSPYHPK. The span at 9–21 shows a compositional bias: basic and acidic residues; the sequence is NKEDKDTSVEPPR. One can recognise a JmjN domain in the interval 61–102; sequence APVFHPTSEEFEDTLAYIEKIRPLAESFGICRIVPPSNWSPP. Residues 128-176 are disordered; it reads NRGPVKKKTPKGRKRKRGKYSRTVAPKKRNGSVSKSVSTPKATEEENFG. The span at 131–157 shows a compositional bias: basic residues; the sequence is PVKKKTPKGRKRKRGKYSRTVAPKKRN. The Nuclear localization signal motif lies at 132–139; that stretch reads VKKKTPKG. The span at 158-168 shows a compositional bias: polar residues; that stretch reads GSVSKSVSTPK. Residues 261-427 enclose the JmjC domain; that stretch reads KYISSGWNLN…HGQNAVEIYS (167 aa). Residues His-307, Glu-309, and His-395 each contribute to the Fe cation site. Cys-514, Cys-517, Cys-528, Cys-531, Cys-539, His-542, Cys-545, and Cys-547 together coordinate Zn(2+). A C5HC2 zinc finger spans residues 514-566; it reads CISCFSDLHLSATGCKNCSSLEEYGCTKHDICSCEGKDRFIFLRYTIDELSSL. The FYR N-terminal domain occupies 629-687; that stretch reads IMDLAAYHVEPINLGFLVVGKLWCNKHAIFPKGFKSRVKFYNVQDPMRISYYVSEIVDA. The FYR C-terminal domain occupies 689 to 775; it reads LLGPLFKVTL…HGQVEYWNHK (87 aa).

Belongs to the JARID1 histone demethylase family. Fe(2+) is required as a cofactor. In terms of tissue distribution, expressed in roots, cotyledons, shoot apex, rosette and cauline leaves, stems, inflorescences and siliques. Expressed at low levels during vegetative growth but to higher levels in young floral organs.

It localises to the nucleus. The enzyme catalyses N(6),N(6),N(6)-trimethyl-L-lysyl(4)-[histone H3] + 2-oxoglutarate + O2 = N(6),N(6)-dimethyl-L-lysyl(4)-[histone H3] + formaldehyde + succinate + CO2. Its function is as follows. Histone demethylase that demethylates 'Lys-4' (H3K4me) of histone H3 with a specific activity for H3K4me3. No activity on H3K4me2, H3K4me1, H3K9me3/2, H3K27me3/2 and H3K36me3/2. Involved in the control of flowering time by demethylating H3K4me3 at the FLC locus and repressing its expression. The repression of FLC level and reduction in H3K4me3 at the FLC locus results in induction of the flowering activator FT, which is a downstream target of FLC. Promotes salt tolerance by down-regulating the expression of several transcriptions factors involved in stress responses via H3K4me3 and H3K4me2 demethylation. In Arabidopsis thaliana (Mouse-ear cress), this protein is Lysine-specific demethylase JMJ15.